Here is a 1368-residue protein sequence, read N- to C-terminus: DNA-directed RNA polymerase subunit beta (1368 aa).

It belongs to the RNA polymerase beta chain family. In terms of assembly, the RNAP catalytic core consists of 2 alpha, 1 beta, 1 beta' and 1 omega subunit. When a sigma factor is associated with the core the holoenzyme is formed, which can initiate transcription.

The enzyme catalyses RNA(n) + a ribonucleoside 5'-triphosphate = RNA(n+1) + diphosphate. Its function is as follows. DNA-dependent RNA polymerase catalyzes the transcription of DNA into RNA using the four ribonucleoside triphosphates as substrates. The protein is DNA-directed RNA polymerase subunit beta of Ralstonia pickettii (strain 12J).